A 355-amino-acid polypeptide reads, in one-letter code: Peptide chain release factor 1 (355 aa).

N5-methylglutamine is present on Gln-233.

The protein belongs to the prokaryotic/mitochondrial release factor family. Post-translationally, methylated by PrmC. Methylation increases the termination efficiency of RF1.

It localises to the cytoplasm. In terms of biological role, peptide chain release factor 1 directs the termination of translation in response to the peptide chain termination codons UAG and UAA. The chain is Peptide chain release factor 1 from Syntrophobacter fumaroxidans (strain DSM 10017 / MPOB).